The primary structure comprises 85 residues: MAHKKGLGSSKNGRDSNAQRLGVKVFGGQLVPGGSIIVRQRGTKIKPGNNVGWGKDDTLFAKVTGVVEFRDRGRMGKFVNINASV.

The protein belongs to the bacterial ribosomal protein bL27 family.

The chain is Large ribosomal subunit protein bL27 from Solibacter usitatus (strain Ellin6076).